The following is a 148-amino-acid chain: Cyanate hydratase (148 aa).

Catalysis depends on residues Arg-89, Glu-92, and Ser-115.

This sequence belongs to the cyanase family.

It catalyses the reaction cyanate + hydrogencarbonate + 3 H(+) = NH4(+) + 2 CO2. Its function is as follows. Catalyzes the reaction of cyanate with bicarbonate to produce ammonia and carbon dioxide. This is Cyanate hydratase from Sulfurisphaera tokodaii (strain DSM 16993 / JCM 10545 / NBRC 100140 / 7) (Sulfolobus tokodaii).